A 557-amino-acid polypeptide reads, in one-letter code: Pre-mRNA-processing protein 45 (557 aa).

3 disordered regions span residues 1–32 (MALL…TSHA), 208–243 (EQDP…KVSA), and 316–444 (MAEK…MSSD). The span at 16–25 (DFDDEEEDYV) shows a compositional bias: acidic residues. The segment covering 224-235 (RGPPSPPPPVLH) has biased composition (pro residues). A phosphoserine mark is found at Ser-228 and Ser-236. A compositionally biased stretch (basic and acidic residues) spans 316–327 (MAEKEKQEKEQR). Ser-376 is modified (phosphoserine). Positions 386 to 430 (EAFRRRQELRRERRRQAEKDLRLSRMGAEKRAKLAEKDRPRDVAE) are enriched in basic and acidic residues.

It belongs to the SNW family. As to quaternary structure, homodimer. Interacts with cyp1 and the small 23 kDa subunit of the splicing factor U2AF (u2af23). Belongs to the 40S cdc5-associated complex (or cwf complex), a spliceosome sub-complex reminiscent of a late-stage spliceosome composed of the U2, U5 and U6 snRNAs and at least brr2, cdc5, cwf2/prp3, cwf3/syf1, cwf4/syf3, cwf5/ecm2, spp42/cwf6, cwf7/spf27, cwf8, cwf9, cwf10, cwf11, cwf12, prp45/cwf13, cwf14, cwf15, cwf16, cwf17, cwf18, cwf19, cwf20, cwf21, cwf22, cwf23, cwf24, cwf25, cwf26, cyp7/cwf27, cwf28, cwf29/ist3, lea1, msl1, prp5/cwf1, prp10, prp12/sap130, prp17, prp22, sap61, sap62, sap114, sap145, slu7, smb1, smd1, smd3, smf1, smg1 and syf2.

The protein resides in the nucleus. Involved in pre-mRNA splicing. This Schizosaccharomyces pombe (strain 972 / ATCC 24843) (Fission yeast) protein is Pre-mRNA-processing protein 45 (prp45).